The chain runs to 340 residues: Proline-rich transmembrane protein 2 (340 aa).

A disordered region spans residues 1-261 (MAASSSEISE…AGPGVEGGEG (261 aa)). The Cytoplasmic portion of the chain corresponds to 1–268 (MAASSSEISE…GEGTQKPRDY (268 aa)). The span at 9-18 (SEMKGVEESP) shows a compositional bias: basic and acidic residues. Serine 28 carries the post-translational modification Phosphoserine. Threonine 74 carries the post-translational modification Phosphothreonine. Pro residues-rich tracts occupy residues 131–155 (PPEP…PKPA) and 197–207 (APEPHSPPSKK). Serine 238 is subject to Phosphoserine. Arginine 240 carries the post-translational modification Omega-N-methylarginine. Serine 248 and serine 249 each carry phosphoserine. The helical intramembrane region spans 269 to 289 (IILAILSCFCPMWPVNIVAFA). Over 290–317 (YAVMSRNSLQQGDVDGAQRLGRVAKLLS) the chain is Cytoplasmic. A helical membrane pass occupies residues 318 to 338 (IVALVGGVLIIIASCVINLGV). Over 339-340 (YK) the chain is Extracellular.

It belongs to the CD225/Dispanin family. Component of the outer core of AMPAR complex. AMPAR complex consists of an inner core made of 4 pore-forming GluA/GRIA proteins (GRIA1, GRIA2, GRIA3 and GRIA4) and 4 major auxiliary subunits arranged in a twofold symmetry. One of the two pairs of distinct binding sites is occupied either by CNIH2, CNIH3 or CACNG2, CACNG3. The other harbors CACNG2, CACNG3, CACNG4, CACNG8 or GSG1L. This inner core of AMPAR complex is complemented by outer core constituents binding directly to the GluA/GRIA proteins at sites distinct from the interaction sites of the inner core constituents. Outer core constituents include at least PRRT1, PRRT2, CKAMP44/SHISA9, FRRS1L and NRN1. The proteins of the inner and outer core serve as a platform for other, more peripherally associated AMPAR constituents. Alone or in combination, these auxiliary subunits control the gating and pharmacology of the AMPAR complex and profoundly impact their biogenesis and protein processing. Interacts with intersectin 1/ITSN1. Interacts with SNARE complex components, including SNAP25, STX1A, SYT1 and SYT2; this interaction may inhibit SNARE complex formation.

The protein resides in the cell membrane. It localises to the presynaptic cell membrane. It is found in the synapse. The protein localises to the cell projection. Its subcellular location is the axon. The protein resides in the cytoplasmic vesicle. It localises to the secretory vesicle. It is found in the synaptic vesicle membrane. The protein localises to the postsynaptic density membrane. Its subcellular location is the dendritic spine. In terms of biological role, as a component of the outer core of AMPAR complex, may be involved in synaptic transmission in the central nervous system. In hippocampal neurons, in presynaptic terminals, plays an important role in the final steps of neurotransmitter release, possibly by regulating Ca(2+)-sensing. In the cerebellum, may inhibit SNARE complex formation and down-regulate short-term facilitation. The polypeptide is Proline-rich transmembrane protein 2 (PRRT2) (Homo sapiens (Human)).